Consider the following 119-residue polypeptide: Small ribosomal subunit protein uS13 (119 aa).

Positions 92-110 (RKDTCKRSTKKNARTRKGP) are enriched in basic residues. Residues 92 to 119 (RKDTCKRSTKKNARTRKGPKKDNRWKER) are disordered.

The protein belongs to the universal ribosomal protein uS13 family. In terms of assembly, part of the 30S ribosomal subunit. Forms a loose heterodimer with protein S19. Forms two bridges to the 50S subunit in the 70S ribosome.

Functionally, located at the top of the head of the 30S subunit, it contacts several helices of the 16S rRNA. In the 70S ribosome it contacts the 23S rRNA (bridge B1a) and protein L5 of the 50S subunit (bridge B1b), connecting the 2 subunits; these bridges are implicated in subunit movement. Contacts the tRNAs in the A and P-sites. The protein is Small ribosomal subunit protein uS13 of Mycoplasma sp.